The primary structure comprises 2090 residues: Nuclear pore complex protein Nup205 (2090 aa).

It belongs to the NUP186/NUP192/NUP205 family. In terms of assembly, part of the nuclear pore complex (NPC).

Its subcellular location is the nucleus. It localises to the nuclear pore complex. In terms of biological role, plays a role in the nuclear pore complex (NPC) assembly and maintenance, but with limited role in NPC permeability. Required for specific nuclear import pathways such as Mad import. In Drosophila melanogaster (Fruit fly), this protein is Nuclear pore complex protein Nup205.